We begin with the raw amino-acid sequence, 263 residues long: HTH-type transcriptional repressor NanR (263 aa).

The tract at residues 1-22 is disordered; it reads MGLMNAFDSQTEDSSPAIGRNL. Positions 30–98 constitute an HTH gntR-type domain; sequence KKLSEMVEEE…NGERARVSRP (69 aa). Residues 58–77 constitute a DNA-binding region (H-T-H motif); it reads ERELMAFFNVGRPSVREALA.

The protein belongs to the NanR family.

Functionally, transcriptional repressor that controls expression of the genes required for the catabolism of sialic acids. This Shigella sonnei (strain Ss046) protein is HTH-type transcriptional repressor NanR.